Consider the following 90-residue polypeptide: Small ribosomal subunit protein bS20 (90 aa).

It belongs to the bacterial ribosomal protein bS20 family.

Binds directly to 16S ribosomal RNA. The protein is Small ribosomal subunit protein bS20 of Rickettsia akari (strain Hartford).